The following is a 464-amino-acid chain: Soluble pyridine nucleotide transhydrogenase (464 aa).

An FAD-binding site is contributed by 35–44 (DSRRQVGGNC).

This sequence belongs to the class-I pyridine nucleotide-disulfide oxidoreductase family. FAD is required as a cofactor.

The protein resides in the cytoplasm. The enzyme catalyses NAD(+) + NADPH = NADH + NADP(+). Its function is as follows. Conversion of NADPH, generated by peripheral catabolic pathways, to NADH, which can enter the respiratory chain for energy generation. The protein is Soluble pyridine nucleotide transhydrogenase of Pseudomonas savastanoi pv. phaseolicola (strain 1448A / Race 6) (Pseudomonas syringae pv. phaseolicola (strain 1448A / Race 6)).